The sequence spans 549 residues: Undecaprenyl phosphate-alpha-4-amino-4-deoxy-L-arabinose arabinosyl transferase 2 (549 aa).

12 helical membrane-spanning segments follow: residues 9–29, 80–102, 112–132, 133–153, 176–196, 204–224, 259–279, 290–310, 312–332, 342–362, 377–397, and 402–422; these read LLLG…GLWI, LFGV…FLIA, SFVC…AGYA, NLDP…WFAL, FMTK…PWML, LLLY…PWAL, FYLP…PVAF, GIAF…LSNG, LPTY…HALA, ALGL…IGLV, SLVL…LQAF, and CWAA…AALP.

It belongs to the glycosyltransferase 83 family.

It localises to the cell inner membrane. It catalyses the reaction 4-amino-4-deoxy-alpha-L-arabinopyranosyl di-trans,octa-cis-undecaprenyl phosphate + lipid IVA = lipid IIA + di-trans,octa-cis-undecaprenyl phosphate.. It functions in the pathway lipopolysaccharide metabolism; 4-amino-4-deoxy-beta-L-arabinose-lipid A biosynthesis. Functionally, catalyzes the transfer of the L-Ara4N moiety of the glycolipid undecaprenyl phosphate-alpha-L-Ara4N to lipid A. The modified arabinose is attached to lipid A and is required for resistance to polymyxin and cationic antimicrobial peptides. In Pseudomonas fluorescens (strain Pf0-1), this protein is Undecaprenyl phosphate-alpha-4-amino-4-deoxy-L-arabinose arabinosyl transferase 2.